The following is a 448-amino-acid chain: Squalene synthase ERG9 (448 aa).

A helical membrane pass occupies residues 420–440 (RIEPGNFNCNVVLFGIGALIL).

Belongs to the phytoene/squalene synthase family. It depends on Mg(2+) as a cofactor.

It is found in the endoplasmic reticulum membrane. The protein resides in the microsome. It carries out the reaction 2 (2E,6E)-farnesyl diphosphate + NADPH + H(+) = squalene + 2 diphosphate + NADP(+). The enzyme catalyses 2 (2E,6E)-farnesyl diphosphate + NADH + H(+) = squalene + 2 diphosphate + NAD(+). Its pathway is terpene metabolism; lanosterol biosynthesis; lanosterol from farnesyl diphosphate: step 1/3. Its function is as follows. Squalene synthase; part of the third module of ergosterol biosynthesis pathway that includes the late steps of the pathway. ERG9 produces squalene from 2 farnesyl pyrophosphate moieties. The third module or late pathway involves the ergosterol synthesis itself through consecutive reactions that mainly occur in the endoplasmic reticulum (ER) membrane. Firstly, the squalene synthase ERG9 catalyzes the condensation of 2 farnesyl pyrophosphate moieties to form squalene, which is the precursor of all steroids. Squalene synthase is crucial for balancing the incorporation of farnesyl diphosphate (FPP) into sterol and nonsterol isoprene synthesis. Secondly, the squalene epoxidase ERG1 catalyzes the stereospecific oxidation of squalene to (S)-2,3-epoxysqualene, which is considered to be a rate-limiting enzyme in steroid biosynthesis. Then, the lanosterol synthase ERG7 catalyzes the cyclization of (S)-2,3 oxidosqualene to lanosterol, a reaction that forms the sterol core. In the next steps, lanosterol is transformed to zymosterol through a complex process involving various demethylation, reduction and desaturation reactions. The lanosterol 14-alpha-demethylase ERG11 (also known as CYP51) catalyzes C14-demethylation of lanosterol to produce 4,4'-dimethyl cholesta-8,14,24-triene-3-beta-ol, which is critical for ergosterol biosynthesis. The C-14 reductase ERG24 reduces the C14=C15 double bond of 4,4-dimethyl-cholesta-8,14,24-trienol to produce 4,4-dimethyl-cholesta-8,24-dienol. 4,4-dimethyl-cholesta-8,24-dienol is substrate of the C-4 demethylation complex ERG25-ERG26-ERG27 in which ERG25 catalyzes the three-step monooxygenation required for the demethylation of 4,4-dimethyl and 4alpha-methylsterols, ERG26 catalyzes the oxidative decarboxylation that results in a reduction of the 3-beta-hydroxy group at the C-3 carbon to an oxo group, and ERG27 is responsible for the reduction of the keto group on the C-3. ERG28 has a role as a scaffold to help anchor ERG25, ERG26 and ERG27 to the endoplasmic reticulum and ERG29 regulates the activity of the iron-containing C4-methylsterol oxidase ERG25. Then, the sterol 24-C-methyltransferase ERG6 catalyzes the methyl transfer from S-adenosyl-methionine to the C-24 of zymosterol to form fecosterol. The C-8 sterol isomerase ERG2 catalyzes the reaction which results in unsaturation at C-7 in the B ring of sterols and thus converts fecosterol to episterol. The sterol-C5-desaturase ERG3 then catalyzes the introduction of a C-5 double bond in the B ring to produce 5-dehydroepisterol. The C-22 sterol desaturase ERG5 further converts 5-dehydroepisterol into ergosta-5,7,22,24(28)-tetraen-3beta-ol by forming the C-22(23) double bond in the sterol side chain. Finally, ergosta-5,7,22,24(28)-tetraen-3beta-ol is substrate of the C-24(28) sterol reductase ERG4 to produce ergosterol. The polypeptide is Squalene synthase ERG9 (Candida albicans (Yeast)).